The sequence spans 424 residues: Light-independent protochlorophyllide reductase subunit N (424 aa).

C27, C52, and C113 together coordinate [4Fe-4S] cluster.

Belongs to the BchN/ChlN family. Protochlorophyllide reductase is composed of three subunits; BchL, BchN and BchB. Forms a heterotetramer of two BchB and two BchN subunits. [4Fe-4S] cluster is required as a cofactor.

It carries out the reaction chlorophyllide a + oxidized 2[4Fe-4S]-[ferredoxin] + 2 ADP + 2 phosphate = protochlorophyllide a + reduced 2[4Fe-4S]-[ferredoxin] + 2 ATP + 2 H2O. It participates in porphyrin-containing compound metabolism; bacteriochlorophyll biosynthesis (light-independent). In terms of biological role, component of the dark-operative protochlorophyllide reductase (DPOR) that uses Mg-ATP and reduced ferredoxin to reduce ring D of protochlorophyllide (Pchlide) to form chlorophyllide a (Chlide). This reaction is light-independent. The NB-protein (BchN-BchB) is the catalytic component of the complex. This Halorhodospira halophila (strain DSM 244 / SL1) (Ectothiorhodospira halophila (strain DSM 244 / SL1)) protein is Light-independent protochlorophyllide reductase subunit N.